The primary structure comprises 133 residues: Transcription antitermination protein NusB (133 aa).

It belongs to the NusB family.

Its function is as follows. Involved in transcription antitermination. Required for transcription of ribosomal RNA (rRNA) genes. Binds specifically to the boxA antiterminator sequence of the ribosomal RNA (rrn) operons. In Shewanella denitrificans (strain OS217 / ATCC BAA-1090 / DSM 15013), this protein is Transcription antitermination protein NusB.